The following is a 559-amino-acid chain: Transmembrane E3 ubiquitin-protein ligase FLY2 (559 aa).

A signal peptide spans 1–29 (MNNLGNFGVWGFGFFSLSIWFAVLQQANG). The Lumenal segment spans residues 30–259 (LRPIRETARS…TSINVEVYYN (230 aa)). A helical membrane pass occupies residues 260 to 280 (KAVNYTLMVTFVSFLQVLLLI). At 281–294 (RQMEHSNTQSGAAK) the chain is on the cytoplasmic side. The helical transmembrane segment at 295-315 (VSIVMIGQQAIMDSYLCLLHL) threads the bilayer. The Lumenal segment spans residues 316-318 (TAG). The chain crosses the membrane as a helical span at residues 319-339 (ILVESLFNAFATAAFFKFVVF). The Cytoplasmic segment spans residues 340 to 370 (SIFEMRYLLSIWKATRPSTSGEGWETMRREL). A helical membrane pass occupies residues 371–391 (SFLYSRFYGILLGGILLMYEF). Residues 392 to 394 (HNY) lie on the Lumenal side of the membrane. Residues 395–415 (MRPILLLMYSFWIPQIVANVV) traverse the membrane as a helical segment. Over 416–423 (RDSRKPLH) the chain is Cytoplasmic. Residues 424-444 (PYYILGMTVTRLAIPLYVFGC) traverse the membrane as a helical segment. Over 445 to 458 (PKNFMRVEPSKAWC) the chain is Lumenal. Residues 459 to 479 (VSLCAFMGFQAGVLLLQHYFG) form a helical membrane-spanning segment. Topologically, residues 480–559 (SRCFVPRKLL…PTCRRPLPPA (80 aa)) are cytoplasmic. An RING-type; atypical zinc finger spans residues 509–553 (CVICMTTIDLRHRINDCMVTPCEHIFHSGCLQRWMDIKMECPTCR).

As to expression, highly expressed in stems. Expressed in root xylem and seed coat.

It is found in the endomembrane system. It carries out the reaction S-ubiquitinyl-[E2 ubiquitin-conjugating enzyme]-L-cysteine + [acceptor protein]-L-lysine = [E2 ubiquitin-conjugating enzyme]-L-cysteine + N(6)-ubiquitinyl-[acceptor protein]-L-lysine.. The protein operates within protein modification; protein ubiquitination. Functionally, E3 ubiquitin-protein ligase that may be involved in xylem development. This is Transmembrane E3 ubiquitin-protein ligase FLY2 from Arabidopsis thaliana (Mouse-ear cress).